Here is a 215-residue protein sequence, read N- to C-terminus: Thymidylate kinase (215 aa).

11–18 (GIDGAGKS) contributes to the ATP binding site.

It belongs to the thymidylate kinase family.

It carries out the reaction dTMP + ATP = dTDP + ADP. Phosphorylation of dTMP to form dTDP in both de novo and salvage pathways of dTTP synthesis. The chain is Thymidylate kinase from Nitrosomonas eutropha (strain DSM 101675 / C91 / Nm57).